The primary structure comprises 291 residues: Acetyl-coenzyme A carboxylase carboxyl transferase subunit beta (291 aa).

The 269-residue stretch at 23–291 (VWHKCPSCTA…PPDLPVEESV (269 aa)) folds into the CoA carboxyltransferase N-terminal domain. 4 residues coordinate Zn(2+): C27, C30, C46, and C49. The C4-type zinc-finger motif lies at 27-49 (CPSCTAVLYRVELERNLEVCPKC).

It belongs to the AccD/PCCB family. Acetyl-CoA carboxylase is a heterohexamer composed of biotin carboxyl carrier protein (AccB), biotin carboxylase (AccC) and two subunits each of ACCase subunit alpha (AccA) and ACCase subunit beta (AccD). It depends on Zn(2+) as a cofactor.

It is found in the cytoplasm. The catalysed reaction is N(6)-carboxybiotinyl-L-lysyl-[protein] + acetyl-CoA = N(6)-biotinyl-L-lysyl-[protein] + malonyl-CoA. Its pathway is lipid metabolism; malonyl-CoA biosynthesis; malonyl-CoA from acetyl-CoA: step 1/1. Component of the acetyl coenzyme A carboxylase (ACC) complex. Biotin carboxylase (BC) catalyzes the carboxylation of biotin on its carrier protein (BCCP) and then the CO(2) group is transferred by the transcarboxylase to acetyl-CoA to form malonyl-CoA. This Coxiella burnetii (strain Dugway 5J108-111) protein is Acetyl-coenzyme A carboxylase carboxyl transferase subunit beta.